The primary structure comprises 301 residues: Oxygen-dependent coproporphyrinogen-III oxidase (301 aa).

Ser90 lines the substrate pocket. A divalent metal cation contacts are provided by His94 and His104. The active-site Proton donor is the His104. Position 106-108 (106-108 (NVR)) interacts with substrate. Residues His143 and His173 each coordinate a divalent metal cation. An important for dimerization region spans residues 238 to 273 (YVEFNLVWDRGTLFGLQSGGRTESILMSLPPIVKWR). 256–258 (GGR) provides a ligand contact to substrate.

The protein belongs to the aerobic coproporphyrinogen-III oxidase family. In terms of assembly, homodimer. Requires a divalent metal cation as cofactor.

The protein resides in the cytoplasm. The enzyme catalyses coproporphyrinogen III + O2 + 2 H(+) = protoporphyrinogen IX + 2 CO2 + 2 H2O. It participates in porphyrin-containing compound metabolism; protoporphyrin-IX biosynthesis; protoporphyrinogen-IX from coproporphyrinogen-III (O2 route): step 1/1. Functionally, involved in the heme biosynthesis. Catalyzes the aerobic oxidative decarboxylation of propionate groups of rings A and B of coproporphyrinogen-III to yield the vinyl groups in protoporphyrinogen-IX. In Nitrosomonas eutropha (strain DSM 101675 / C91 / Nm57), this protein is Oxygen-dependent coproporphyrinogen-III oxidase.